The sequence spans 219 residues: Thiamine-phosphate synthase (219 aa).

4-amino-2-methyl-5-(diphosphooxymethyl)pyrimidine is bound by residues 44-48 and asparagine 79; that span reads QFREK. Mg(2+) is bound by residues aspartate 80 and aspartate 99. Serine 117 is a binding site for 4-amino-2-methyl-5-(diphosphooxymethyl)pyrimidine. 143-145 provides a ligand contact to 2-[(2R,5Z)-2-carboxy-4-methylthiazol-5(2H)-ylidene]ethyl phosphate; that stretch reads TST. Residue lysine 146 coordinates 4-amino-2-methyl-5-(diphosphooxymethyl)pyrimidine. Residues glycine 175 and 195–196 each bind 2-[(2R,5Z)-2-carboxy-4-methylthiazol-5(2H)-ylidene]ethyl phosphate; that span reads IS.

This sequence belongs to the thiamine-phosphate synthase family. Requires Mg(2+) as cofactor.

It catalyses the reaction 2-[(2R,5Z)-2-carboxy-4-methylthiazol-5(2H)-ylidene]ethyl phosphate + 4-amino-2-methyl-5-(diphosphooxymethyl)pyrimidine + 2 H(+) = thiamine phosphate + CO2 + diphosphate. The catalysed reaction is 2-(2-carboxy-4-methylthiazol-5-yl)ethyl phosphate + 4-amino-2-methyl-5-(diphosphooxymethyl)pyrimidine + 2 H(+) = thiamine phosphate + CO2 + diphosphate. The enzyme catalyses 4-methyl-5-(2-phosphooxyethyl)-thiazole + 4-amino-2-methyl-5-(diphosphooxymethyl)pyrimidine + H(+) = thiamine phosphate + diphosphate. Its pathway is cofactor biosynthesis; thiamine diphosphate biosynthesis; thiamine phosphate from 4-amino-2-methyl-5-diphosphomethylpyrimidine and 4-methyl-5-(2-phosphoethyl)-thiazole: step 1/1. In terms of biological role, condenses 4-methyl-5-(beta-hydroxyethyl)thiazole monophosphate (THZ-P) and 2-methyl-4-amino-5-hydroxymethyl pyrimidine pyrophosphate (HMP-PP) to form thiamine monophosphate (TMP). The sequence is that of Thiamine-phosphate synthase from Bacillus thuringiensis subsp. konkukian (strain 97-27).